Consider the following 129-residue polypeptide: Small ribosomal subunit protein bS16m (129 aa).

It belongs to the bacterial ribosomal protein bS16 family. As to quaternary structure, component of the mitochondrial ribosome small subunit (28S) which comprises a 12S rRNA and about 30 distinct proteins.

The protein localises to the mitochondrion. This Drosophila melanogaster (Fruit fly) protein is Small ribosomal subunit protein bS16m (mRpS16).